Reading from the N-terminus, the 203-residue chain is ATP-dependent Clp protease proteolytic subunit (203 aa).

Catalysis depends on Ser107, which acts as the Nucleophile. His132 is a catalytic residue.

This sequence belongs to the peptidase S14 family. In terms of assembly, fourteen ClpP subunits assemble into 2 heptameric rings which stack back to back to give a disk-like structure with a central cavity, resembling the structure of eukaryotic proteasomes.

It is found in the cytoplasm. The enzyme catalyses Hydrolysis of proteins to small peptides in the presence of ATP and magnesium. alpha-casein is the usual test substrate. In the absence of ATP, only oligopeptides shorter than five residues are hydrolyzed (such as succinyl-Leu-Tyr-|-NHMec, and Leu-Tyr-Leu-|-Tyr-Trp, in which cleavage of the -Tyr-|-Leu- and -Tyr-|-Trp bonds also occurs).. In terms of biological role, cleaves peptides in various proteins in a process that requires ATP hydrolysis. Has a chymotrypsin-like activity. Plays a major role in the degradation of misfolded proteins. This Shewanella pealeana (strain ATCC 700345 / ANG-SQ1) protein is ATP-dependent Clp protease proteolytic subunit.